We begin with the raw amino-acid sequence, 133 residues long: NADPH-dependent 7-cyano-7-deazaguanine reductase (133 aa).

C46 functions as the Thioimide intermediate in the catalytic mechanism. The active-site Proton donor is the D53. Substrate-binding positions include 68–70 and 87–88; these read VEL and HE.

It belongs to the GTP cyclohydrolase I family. QueF type 1 subfamily.

It localises to the cytoplasm. The catalysed reaction is 7-aminomethyl-7-carbaguanine + 2 NADP(+) = 7-cyano-7-deazaguanine + 2 NADPH + 3 H(+). It participates in tRNA modification; tRNA-queuosine biosynthesis. In terms of biological role, catalyzes the NADPH-dependent reduction of 7-cyano-7-deazaguanine (preQ0) to 7-aminomethyl-7-deazaguanine (preQ1). This Parasynechococcus marenigrum (strain WH8102) protein is NADPH-dependent 7-cyano-7-deazaguanine reductase.